The chain runs to 355 residues: Peptide chain release factor 1 (355 aa).

Gln-231 carries the post-translational modification N5-methylglutamine. The segment covering 280-291 has biased composition (basic and acidic residues); it reads SERLAKESEARK. Positions 280–303 are disordered; sequence SERLAKESEARKSQVGSGDRSERI.

This sequence belongs to the prokaryotic/mitochondrial release factor family. In terms of processing, methylated by PrmC. Methylation increases the termination efficiency of RF1.

Its subcellular location is the cytoplasm. Peptide chain release factor 1 directs the termination of translation in response to the peptide chain termination codons UAG and UAA. This is Peptide chain release factor 1 from Campylobacter jejuni subsp. jejuni serotype O:2 (strain ATCC 700819 / NCTC 11168).